The sequence spans 1507 residues: Histone-lysine N-methyltransferase set-2 (1507 aa).

The interval 1 to 32 is disordered; it reads MSTHDMNHHPPRKSHSKRDKPSSSNSGPKIEN. The span at 9–18 shows a compositional bias: basic residues; that stretch reads HPPRKSHSKR. One can recognise an RRM domain in the interval 128 to 199; it reads VSLFNMDDNC…QNLLATKCTP (72 aa). 5 disordered regions span residues 280-578, 650-697, 803-826, 842-1058, and 1163-1199; these read DYTM…QPQM, EPFS…EEPA, DEEK…SNHL, SSRG…GPII, and QKPR…FKPR. The segment covering 296 to 315 has biased composition (pro residues); that stretch reads PIPPPPIKEESPPPPPPPPV. The segment covering 316-327 has biased composition (low complexity); sequence ASVSNLAPVPSV. Polar residues predominate over residues 331 to 342; the sequence is YYNNIQPSSSTM. A compositionally biased stretch (basic and acidic residues) spans 413–444; that stretch reads VKYETYKMEKRKIKYEGGNKKYEQVHIKERTA. A compositionally biased stretch (low complexity) spans 456 to 465; sequence SSESASGSSS. Basic residues predominate over residues 478-488; sequence KKKKRPKSPNR. Residues 566–575 show a composition bias toward polar residues; that stretch reads HLQTPYQHVQ. 2 stretches are compositionally biased toward basic and acidic residues: residues 668-680 and 803-823; these read DVGR…KPSL and DEEK…EKPS. The span at 846–868 shows a compositional bias: basic residues; it reads FYRKQKPIPKSHPKHQEHHHHAK. Over residues 869–908 the composition is skewed to low complexity; sequence ASVSTPVHSSSTSRNSSVAPTPQRTVSTSSSSSSAATSAR. The span at 941 to 951 shows a compositional bias: polar residues; the sequence is SFSSTSIQSSP. The span at 958-971 shows a compositional bias: low complexity; that stretch reads SSSSRTSSSSSTSS. The span at 973 to 982 shows a compositional bias: basic and acidic residues; sequence KQEETADEKS. Residues 990–1007 are compositionally biased toward low complexity; the sequence is SSDESSTTGSTATSVVSS. Basic and acidic residues predominate over residues 1015–1047; that stretch reads QQEKTDGEPPKKKSQTDFISERVSKIEGEERPL. Positions 1179–1190 are enriched in pro residues; that stretch reads EPPPTKRPAPPP. A RxxxRR motif motif is present at residues 1340-1345; that stretch reads RLLQRR. Residues 1368 to 1485 enclose the SET domain; it reads KMIKFARSRI…KGEEITYDYK (118 aa). An S-adenosyl-L-methionine-binding site is contributed by Tyr1484. Residues 1491-1507 form the Post-SET domain; it reads DKIDCLCGAKTCRGYLN.

The protein belongs to the class V-like SAM-binding methyltransferase superfamily. Component of the Set1C/COMPASS complex (also known as the SET2 complex), which contains at least set-2, swd-2.1, cfp-1, rbbp-5, wdr-5.1, dpy-30 and ash-2. Expressed in all cells of embryo. In L1 larva, it is predominantly expressed in Z2 and Z3 primordial germ cells. In adults, it is predominantly expressed in the germline.

Its subcellular location is the nucleus. It carries out the reaction L-lysyl(4)-[histone H3] + 3 S-adenosyl-L-methionine = N(6),N(6),N(6)-trimethyl-L-lysyl(4)-[histone H3] + 3 S-adenosyl-L-homocysteine + 3 H(+). The enzyme catalyses N(6)-methyl-L-lysyl(4)-[histone H3] + S-adenosyl-L-methionine = N(6),N(6)-dimethyl-L-lysyl(4)-[histone H3] + S-adenosyl-L-homocysteine + H(+). The catalysed reaction is N(6),N(6)-dimethyl-L-lysyl(4)-[histone H3] + S-adenosyl-L-methionine = N(6),N(6),N(6)-trimethyl-L-lysyl(4)-[histone H3] + S-adenosyl-L-homocysteine + H(+). Functionally, catalytic component of the COMPASS (Set1C) complex that specifically mono-, di- and trimethylates histone H3 to form H3K4me1/2/3. Binds RNAs which might negatively affect its histone methyltransferase activity. COMPASS recognizes ubiquitinated H2B on one face of the nucleosome which stimulates the methylation of H3 on the opposing face. H3 'Lys-4' methylation represents a specific tag for epigenetic transcriptional activation. Implicated in the epigenetic inheritance of lifespan over several generations. Acts in the germline to limit the longevity of the soma, probably by regulating a lipid metabolism pathway that signals from the germline to the intestine, thereby preventing accumulation of mono-unsaturated fatty acids. Methylation in the germline is required for germline development and fertility, possibly by ensuring genome stability. May act redundantly with mes-3 and mes-4 proteins in the development of a fertile germline. Required for RNAi. Functions as an antagonist of hpl-1 and hpl-2 activity in growth and somatic gonad development. Cooperates with jmjd-3.1 and egl-27 to ensure robust transdifferentiation of the Y rectal cell to the PDA motor neuron during larval development. This Caenorhabditis elegans protein is Histone-lysine N-methyltransferase set-2 (set-2).